A 1012-amino-acid polypeptide reads, in one-letter code: Autotransporter adhesin BpaC (1012 aa).

An N-terminal signal peptide occupies residues 1–71; sequence MNRIFKSIWC…PFAEEAMAAN (71 aa). Residues 72–921 form a surface exposed passenger domain region; it reads NAGVCLTYNG…VGQLNSAVSG (850 aa). 2 disordered regions span residues 420–746 and 785–809; these read GLQG…AGAT and ENST…ESAA. Polar residues predominate over residues 427–442; it reads ANTGTASGDNSTASGD. A compositionally biased stretch (low complexity) spans 443-504; that stretch reads NATASGTNST…ANGTNSTASG (62 aa). Residues 505-519 are compositionally biased toward polar residues; the sequence is DNSTASGTNASATGE. Residues 520–588 show a composition bias toward low complexity; the sequence is NSTATGTDST…ANGTNSTASG (69 aa). Residues 589-603 are compositionally biased toward polar residues; the sequence is DNSTASGTNASATGE. The span at 604-630 shows a compositional bias: low complexity; sequence NSTATGTDSTASGSNSTANGTNSTASG. Over residues 631–645 the composition is skewed to polar residues; it reads DNSTASGTNASATGE. Low complexity-rich tracts occupy residues 646–700 and 708–746; these read NSTA…TASG and TNAS…AGAT. An outer membrane translocation of the passenger domain region spans residues 922 to 959; it reads IRNQMDGMQGQIDTLARDAYSGIAAATALTMIPDVDPG. Positions 960–1012 are translocator domain; it reads KTLAVGIGTANFKGYQASALGATARITQNLKVKTGVSYSGSNYVWGAGMSYQW.

The protein belongs to the autotransporter-2 (AT-2) (TC 1.B.40) family. As to quaternary structure, homotrimer.

Its subcellular location is the cell surface. The protein resides in the cell outer membrane. In terms of biological role, involved in virulence. Mediates adherence to human respiratory epithelial cells. This chain is Autotransporter adhesin BpaC, found in Burkholderia mallei (strain ATCC 23344).